A 367-amino-acid polypeptide reads, in one-letter code: Probable peptidoglycan glycosyltransferase FtsW (367 aa).

Over 1 to 8 (MRRVEGYD) the chain is Cytoplasmic. The helical transmembrane segment at 9-29 (MIVLMMAVILTCFGVVMVYSA) threads the bilayer. Over 30 to 49 (SSVMAAKKFHDGFFFLKRQS) the chain is Periplasmic. A helical transmembrane segment spans residues 50–70 (LYALIGFIGMGVAMHVDYHVW). At 71-72 (KK) the chain is on the cytoplasmic side. Residues 73-93 (WAVPLFLGTFFLLLLVFVPGI) form a helical membrane-spanning segment. Residues 94–138 (GGTAKGASRWIRLPGFNFQPSELAKVALIMYMAYSLEKRQDKLKQ) lie on the Periplasmic side of the membrane. The helical transmembrane segment at 139–159 (FMSGFFPYMLILGVFIAVLLA) threads the bilayer. Residues 160–161 (QH) lie on the Cytoplasmic side of the membrane. The helical transmembrane segment at 162–182 (DMGAALTMLAVAIVMLFAAGT) threads the bilayer. Position 183 (Lys-183) is a topological domain, periplasmic. The helical transmembrane segment at 184-204 (VQYILGMGLVALPGICYLVFT) threads the bilayer. At 205–225 (KAYRMRRITAFLDPWQDPTDA) the chain is on the cytoplasmic side. The chain crosses the membrane as a helical span at residues 226 to 246 (GFQIIQSWLALGTGGFFGQGL). Residues 247–266 (GEGKQKLFYLPEAHTDFILS) are Periplasmic-facing. Residues 267–287 (VLGEEMGFIGVVVIASMFLLL) traverse the membrane as a helical segment. At 288–304 (VQRSIRVAIAAEDSFGR) the chain is on the cytoplasmic side. Residues 305-325 (FLAFGIAILLGLEAFVNMAVV) form a helical membrane-spanning segment. Over 326-335 (TGLLPTKGIA) the chain is Periplasmic. A helical transmembrane segment spans residues 336-356 (LPFLSYGGSSLIISLCSVGVL). Residues 357–367 (LNVSTRMRGAA) lie on the Cytoplasmic side of the membrane.

This sequence belongs to the SEDS family. FtsW subfamily.

The protein localises to the cell inner membrane. It carries out the reaction [GlcNAc-(1-&gt;4)-Mur2Ac(oyl-L-Ala-gamma-D-Glu-L-Lys-D-Ala-D-Ala)](n)-di-trans,octa-cis-undecaprenyl diphosphate + beta-D-GlcNAc-(1-&gt;4)-Mur2Ac(oyl-L-Ala-gamma-D-Glu-L-Lys-D-Ala-D-Ala)-di-trans,octa-cis-undecaprenyl diphosphate = [GlcNAc-(1-&gt;4)-Mur2Ac(oyl-L-Ala-gamma-D-Glu-L-Lys-D-Ala-D-Ala)](n+1)-di-trans,octa-cis-undecaprenyl diphosphate + di-trans,octa-cis-undecaprenyl diphosphate + H(+). It participates in cell wall biogenesis; peptidoglycan biosynthesis. Functionally, peptidoglycan polymerase that is essential for cell division. The protein is Probable peptidoglycan glycosyltransferase FtsW of Geobacter sp. (strain M18).